The sequence spans 1254 residues: MGSSDVSSRECSLVYNEDPDFTDGTTPCDRLGVDLMNVLDDKDEIKQESVPVSDREIEDTESDASAVSSFASANELIAEPHAASETNLGTNGQDGRNVLEQQRDVVARLIEENKETQKEGDKVCIVPKVWYDKFFDPDVTDPEDIGPINTRMICRDFENFVLEDYNRCPYLSIAEPVFNFLSEIYGMTSGSYPVVTNLVINQTTGELETEYNKWFFRLHYLTEKQDGRKRRHGQDDSIMYLSMSALNLVRDLVEKSMNLFFEKADHLDVNAVDFKIWFVSEGSDIATDSNVSTFLNSSYEITPLQFLELPIKKLLIPDMFENRLDKITSNPSDLVIEIKPIEGNHHWPSNYFAYNKLEPASGTTGLVNLGNTCYMNSALQCLVHIPQLRDYFLYDGYEDEINEENPLGYHGYVARAFSDLVQKLFQNRMSIMQRNAAFPPSMFKSTIGHFNSMFSGYMQQDSQEFLAFLLDSLHEDLNRIIKKEYTEKPSLSPGDDVNDWNVVKKLADDTWEMHLKRNCSVITDLFVGMYKSTLYCPECQNVSITFDPYNDVTLPLPVDTVWDKTIKIFPMNSPPLLLEVELSKSSTYMDLKNYVGKMSGLDPNTLFGCEIFSNQIYVNYESTESNAQFLTLQELIKPADDVIFYELPVTNDNEVIVPVLNTRIEKGYKNAMLFGVPFFITLKEDELNNPGAIRMKLQNRFVHLSGGYIPFPEPVGNRTDFADAFPLLVEKYPDVEFEQYKDILQYTSIKVTDKDKSFFSIKILSVEKEQQFASNNRTGPNFWTPISQLNLDKATDIDDKLEDVVKDIYNYSSLVDCAEGVLMQVDDEGDTEGSEAKNFSKPFQSGDDEENKETVTNNENVNNTNDRDEDMELTDDVEEDASTEPELTDKPEALDKIKDSLTSTPFAILSMNDIIVCEWSELGSNEAFSDDKIYNWENPATLPNKELENAKLERSNAKERTITLDDCLQLFSKPEILGLTDSWYCPTCKEHRQATKQIQLWNTPDILLIHLKRFESQRSFSDKIDATVNFPITDLDLSRYVVYKDDPRGLIYDLYAVDNHYGGLGGGHYTAYVKNFADNKWYYFDDSRVTETAPENSIAGSAYLLFYIRRHKDGNGLGSSKLQEIIQKSRHGYDERIKKIYDEQMKLYEFNKTDEEEDVSDDMIECNEDVQAPEYSNRSLEVGHIETQDCNDEDDNDDGERTNSGRRKLRLLKKVYKNNSGLGSSSTSEISEGCPENEVADLNLKNGVTLESPE.

At Ser-84 the chain carries Phosphoserine. Residues 97-199 (NVLEQQRDVV…GSYPVVTNLV (103 aa)) form the DUSP domain. In terms of domain architecture, USP spans 364–1110 (TGLVNLGNTC…SAYLLFYIRR (747 aa)). Catalysis depends on Cys-373, which acts as the Nucleophile. A disordered region spans residues 827–893 (DEGDTEGSEA…EPELTDKPEA (67 aa)). A compositionally biased stretch (low complexity) spans 854–864 (TVTNNENVNNT). The span at 867–883 (RDEDMELTDDVEEDAST) shows a compositional bias: acidic residues. His-1068 functions as the Proton acceptor in the catalytic mechanism. Ser-1160 is modified (phosphoserine). The segment at 1188-1207 (QDCNDEDDNDDGERTNSGRR) is disordered. A compositionally biased stretch (acidic residues) spans 1189 to 1198 (DCNDEDDNDD).

It belongs to the peptidase C19 family. As to quaternary structure, interacts with FZO1.

It catalyses the reaction Thiol-dependent hydrolysis of ester, thioester, amide, peptide and isopeptide bonds formed by the C-terminal Gly of ubiquitin (a 76-residue protein attached to proteins as an intracellular targeting signal).. Ubiquitin carboxyl-terminal hydrolase that recognizes ubiquitin chains that stabilize FZO1 and promote mitochondrial fusion. UBP12 deubiquitylates FZO1 only after oligomerization. This is Ubiquitin carboxyl-terminal hydrolase 12 (UBP12) from Saccharomyces cerevisiae (strain ATCC 204508 / S288c) (Baker's yeast).